Consider the following 360-residue polypeptide: Phospho-N-acetylmuramoyl-pentapeptide-transferase (360 aa).

Helical transmembrane passes span 21–41 (YVTFRAILGLLTALIFSLWWG), 74–94 (MGGILILAGVFISVLLWGDLA), 97–117 (YVWVVLFVLASFGLIGFIDDY), 135–155 (ILQSLAALVIAFYLYASADLV), 168–188 (IMPQLGGFFIVLAYFTIVGSS), 199–219 (GLAIMPTVMVAAAFALIAYLS), 236–256 (AGELVIVCTAIVGAGLGFLWF), 263–283 (VFMGDVGSLALGAALGVIAVL), 288–308 (ILLVIMGGVFVMETVSVILQV), and 338–358 (VIVRFWIISLFLVLLGLATLK).

Belongs to the glycosyltransferase 4 family. MraY subfamily. The cofactor is Mg(2+).

The protein localises to the cell inner membrane. The enzyme catalyses UDP-N-acetyl-alpha-D-muramoyl-L-alanyl-gamma-D-glutamyl-meso-2,6-diaminopimeloyl-D-alanyl-D-alanine + di-trans,octa-cis-undecaprenyl phosphate = di-trans,octa-cis-undecaprenyl diphospho-N-acetyl-alpha-D-muramoyl-L-alanyl-D-glutamyl-meso-2,6-diaminopimeloyl-D-alanyl-D-alanine + UMP. It functions in the pathway cell wall biogenesis; peptidoglycan biosynthesis. Its function is as follows. Catalyzes the initial step of the lipid cycle reactions in the biosynthesis of the cell wall peptidoglycan: transfers peptidoglycan precursor phospho-MurNAc-pentapeptide from UDP-MurNAc-pentapeptide onto the lipid carrier undecaprenyl phosphate, yielding undecaprenyl-pyrophosphoryl-MurNAc-pentapeptide, known as lipid I. The chain is Phospho-N-acetylmuramoyl-pentapeptide-transferase from Shewanella sediminis (strain HAW-EB3).